A 468-amino-acid polypeptide reads, in one-letter code: Tapasin-related protein (468 aa).

An N-terminal signal peptide occupies residues 1–18 (MGTQEGWCLLLCLALSGA). At 19 to 405 (AETKPHPAER…STQVVPPERR (387 aa)) the chain is on the lumenal side. One can recognise an Ig-like V-type domain in the interval 181-297 (PQGTVRTAVE…SLYRAQQIIQ (117 aa)). Intrachain disulfides connect C212–C283 and C321–C382. N-linked (GlcNAc...) asparagine glycosylation is present at N265. One can recognise an Ig-like C1-type domain in the interval 304-394 (PKVRLSLANE…MHISLEEPLG (91 aa)). Residues 406–426 (TALGVIFASSLFLLALLFLGL) traverse the membrane as a helical segment. The Cytoplasmic portion of the chain corresponds to 427–468 (QRRQAPTRVGLLQAERWKTTSCADTQSSHLHEDRTACVSQPS).

As to quaternary structure, interacts with peptide-free HLA-A*02-B2M complexes or those loaded with low affinity peptides, likely facilitating peptide exchange onto higher affinity peptides. Interacts with MR1 in a ligand-independent way; this interaction may stabilize MR1 pool and facilitate ligand loading and dissociation.

The protein resides in the cell membrane. It localises to the endoplasmic reticulum membrane. It is found in the microsome membrane. The protein localises to the golgi apparatus membrane. Functionally, component of the antigen processing and presentation pathway, which binds to MHC class I coupled with beta2-microglobulin/B2M. Association between TAPBPR and MHC class I occurs in the absence of a functional peptide-loading complex (PLC). Expression seems to slow down and down-regulate MHC class I surface expression. This is Tapasin-related protein (TAPBPL) from Pongo abelii (Sumatran orangutan).